A 397-amino-acid polypeptide reads, in one-letter code: Acylalkylpyrone synthase csyB (397 aa).

CoA contacts are provided by residues lysine 50 and lysine 50–lysine 57. The active-site Nucleophile is cysteine 155. Glycine 214–aspartate 215 contacts substrate. CoA is bound by residues isoleucine 267, glycine 312, glycine 312–alanine 315, tyrosine 314, and alanine 315. Residue histidine 377 is part of the active site.

It belongs to the thiolase-like superfamily. Chalcone/stilbene synthases family. As to quaternary structure, homodimer.

Its function is as follows. Acylalkylpyrone synthase that catalyzes not only the polyketide chain elongation but also the one-pot condensation of two beta-ketoacyl units to produce the 3-acyl-4-hydroxy-6-alkyl-alpha-pyrone (AcAP) scaffold, a precursor of csypyrone B. The enzyme reaction is initiated by the loading of acetoacetyl-CoA onto Cys-155, and subsequent thioester bond cleavage by the nucleophilic water generates the beta-keto acid intermediate, which is placed within a pocket. The second beta-ketoacyl unit is then produced by polyketide chain elongation of fatty acyl-CoA with one molecule of malonyl-CoA, and the condensation with the beta-ketoacid generates the final products. Csypyrone B1 is the major product and contains a propanoic acid side-chain, whereas csypyrones B2 and B3 are minor compounds that contain butyric or pentanoic acid side-chains, respectively. The chain is Acylalkylpyrone synthase csyB from Aspergillus oryzae (strain ATCC 42149 / RIB 40) (Yellow koji mold).